The following is a 176-amino-acid chain: Woronin body major protein (176 aa).

Positions 1-16 are excised as a propeptide; it reads MGYYDDDAHGHVEADA. The segment covering 1–16 has biased composition (basic and acidic residues); that stretch reads MGYYDDDAHGHVEADA. Residues 1 to 31 are disordered; the sequence is MGYYDDDAHGHVEADAAPRATTGTGTGSASQ. The short motif at 174–176 is the Microbody targeting signal element; sequence SRL.

The protein belongs to the eIF-5A family. Hex1 subfamily. In terms of assembly, forms oligomers. Self-assembles into hexagonal rods.

Its subcellular location is the cell septum. In terms of biological role, major component of Woronin bodies, fungal-specific organelles that occlude septal pores in order to separate intact from damaged compartments. Hex-1 binds directly or indirectly to the Woronin body tether that in turn is anchored at the rim of the septal pore. This chain is Woronin body major protein, found in Neurospora crassa (strain ATCC 24698 / 74-OR23-1A / CBS 708.71 / DSM 1257 / FGSC 987).